Reading from the N-terminus, the 132-residue chain is Fumarate reductase subunit C (132 aa).

Transmembrane regions (helical) follow at residues 30–50 (ATSV…LCFA), 70–90 (IVVF…VTYF), and 110–130 (VVRN…LVLV).

This sequence belongs to the FrdC family. As to quaternary structure, part of an enzyme complex containing four subunits: a flavoprotein (FrdA), an iron-sulfur protein (FrdB), and two hydrophobic anchor proteins (FrdC and FrdD).

It localises to the cell inner membrane. Anchors the catalytic components of the fumarate reductase complex to the cell membrane, binds quinones. This chain is Fumarate reductase subunit C, found in Haemophilus influenzae (strain ATCC 51907 / DSM 11121 / KW20 / Rd).